The chain runs to 254 residues: Peroxisomal membrane protein 11-2 (254 aa).

The Cytoplasmic portion of the chain corresponds to 1 to 113 (MVTAAGSPSS…YHPHPHVHPL (113 aa)). A helical membrane pass occupies residues 114–134 (LVLLAYGGQGVYNFLEQFAWL). Topologically, residues 135–227 (AKAGLLPARL…TVGDVTGRKG (93 aa)) are lumenal. Residues 228–247 (LLGSSTLMASAGLLSALISV) traverse the membrane as a helical segment. Residues 248–254 (HKNWNSC) lie on the Cytoplasmic side of the membrane.

The protein belongs to the peroxin-11 family.

It is found in the peroxisome membrane. Its function is as follows. Involved in peroxisomal proliferation. This chain is Peroxisomal membrane protein 11-2 (PEX11-2), found in Oryza sativa subsp. japonica (Rice).